Consider the following 322-residue polypeptide: Ribose-phosphate pyrophosphokinase 1 (322 aa).

ATP-binding positions include 39–41 (DGE) and 98–99 (RQ). Residues histidine 132 and aspartate 173 each coordinate Mg(2+). The active site involves lysine 196. Residues arginine 198, aspartate 224, and 228–232 (DTAGT) contribute to the D-ribose 5-phosphate site.

The protein belongs to the ribose-phosphate pyrophosphokinase family. Class I subfamily. In terms of assembly, homohexamer. The cofactor is Mg(2+).

Its subcellular location is the cytoplasm. It catalyses the reaction D-ribose 5-phosphate + ATP = 5-phospho-alpha-D-ribose 1-diphosphate + AMP + H(+). It functions in the pathway metabolic intermediate biosynthesis; 5-phospho-alpha-D-ribose 1-diphosphate biosynthesis; 5-phospho-alpha-D-ribose 1-diphosphate from D-ribose 5-phosphate (route I): step 1/1. Involved in the biosynthesis of the central metabolite phospho-alpha-D-ribosyl-1-pyrophosphate (PRPP) via the transfer of pyrophosphoryl group from ATP to 1-hydroxyl of ribose-5-phosphate (Rib-5-P). The polypeptide is Ribose-phosphate pyrophosphokinase 1 (Streptococcus pneumoniae serotype 4 (strain ATCC BAA-334 / TIGR4)).